A 120-amino-acid chain; its full sequence is NAD(P)H-quinone oxidoreductase subunit 3 (120 aa).

3 helical membrane passes run 6–26 (GYDA…LALV), 64–84 (MFAL…PWAV), and 89–109 (LGLL…VALA).

The protein belongs to the complex I subunit 3 family. In terms of assembly, NDH-1 can be composed of about 15 different subunits; different subcomplexes with different compositions have been identified which probably have different functions.

It localises to the cellular thylakoid membrane. It catalyses the reaction a plastoquinone + NADH + (n+1) H(+)(in) = a plastoquinol + NAD(+) + n H(+)(out). The enzyme catalyses a plastoquinone + NADPH + (n+1) H(+)(in) = a plastoquinol + NADP(+) + n H(+)(out). Its function is as follows. NDH-1 shuttles electrons from an unknown electron donor, via FMN and iron-sulfur (Fe-S) centers, to quinones in the respiratory and/or the photosynthetic chain. The immediate electron acceptor for the enzyme in this species is believed to be plastoquinone. Couples the redox reaction to proton translocation, and thus conserves the redox energy in a proton gradient. Cyanobacterial NDH-1 also plays a role in inorganic carbon-concentration. This is NAD(P)H-quinone oxidoreductase subunit 3 from Synechococcus sp. (strain WH7803).